The sequence spans 307 residues: Non-homologous end joining protein Ku (307 aa).

One can recognise a Ku domain in the interval 11–179 (LSFGLVSIPV…EVRSMKDLNI (169 aa)). Composition is skewed to low complexity over residues 257–267 (RGGAKAKPAAA) and 290–307 (ARAP…RARK). The disordered stretch occupies residues 257-307 (RGGAKAKPAAAPRRKAPEPVAGMAEATRARKPAARAPKSPAEAPAKVRARK).

Belongs to the prokaryotic Ku family. Homodimer. Interacts with LigD.

Its function is as follows. With LigD forms a non-homologous end joining (NHEJ) DNA repair enzyme, which repairs dsDNA breaks with reduced fidelity. Binds linear dsDNA with 5'- and 3'- overhangs but not closed circular dsDNA nor ssDNA. Recruits and stimulates the ligase activity of LigD. This Paraburkholderia phymatum (strain DSM 17167 / CIP 108236 / LMG 21445 / STM815) (Burkholderia phymatum) protein is Non-homologous end joining protein Ku.